Consider the following 491-residue polypeptide: Glutamate--tRNA ligase (491 aa).

Residues 10 to 20 carry the 'HIGH' region motif; that stretch reads PSPTGYLHIGG. The short motif at 243-247 is the 'KMSKS' region element; sequence KISKR. K246 is a binding site for ATP.

This sequence belongs to the class-I aminoacyl-tRNA synthetase family. Glutamate--tRNA ligase type 1 subfamily. As to quaternary structure, monomer.

Its subcellular location is the cytoplasm. The catalysed reaction is tRNA(Glu) + L-glutamate + ATP = L-glutamyl-tRNA(Glu) + AMP + diphosphate. Functionally, catalyzes the attachment of glutamate to tRNA(Glu) in a two-step reaction: glutamate is first activated by ATP to form Glu-AMP and then transferred to the acceptor end of tRNA(Glu). The protein is Glutamate--tRNA ligase of Desulfotalea psychrophila (strain LSv54 / DSM 12343).